A 361-amino-acid chain; its full sequence is Queuine tRNA-ribosyltransferase (361 aa).

Aspartate 89 (proton acceptor) is an active-site residue. Residues 89-93 (DSGGF), aspartate 143, glutamine 185, and glycine 212 contribute to the substrate site. Residues 243–249 (GVGTPED) are RNA binding. The active-site Nucleophile is the aspartate 262. Positions 267-271 (TRNAR) are RNA binding; important for wobble base 34 recognition. Zn(2+) contacts are provided by cysteine 300, cysteine 302, cysteine 305, and histidine 331.

It belongs to the queuine tRNA-ribosyltransferase family. As to quaternary structure, homodimer. Within each dimer, one monomer is responsible for RNA recognition and catalysis, while the other monomer binds to the replacement base PreQ1. The cofactor is Zn(2+).

The catalysed reaction is 7-aminomethyl-7-carbaguanine + guanosine(34) in tRNA = 7-aminomethyl-7-carbaguanosine(34) in tRNA + guanine. The protein operates within tRNA modification; tRNA-queuosine biosynthesis. Catalyzes the base-exchange of a guanine (G) residue with the queuine precursor 7-aminomethyl-7-deazaguanine (PreQ1) at position 34 (anticodon wobble position) in tRNAs with GU(N) anticodons (tRNA-Asp, -Asn, -His and -Tyr). Catalysis occurs through a double-displacement mechanism. The nucleophile active site attacks the C1' of nucleotide 34 to detach the guanine base from the RNA, forming a covalent enzyme-RNA intermediate. The proton acceptor active site deprotonates the incoming PreQ1, allowing a nucleophilic attack on the C1' of the ribose to form the product. After dissociation, two additional enzymatic reactions on the tRNA convert PreQ1 to queuine (Q), resulting in the hypermodified nucleoside queuosine (7-(((4,5-cis-dihydroxy-2-cyclopenten-1-yl)amino)methyl)-7-deazaguanosine). The sequence is that of Queuine tRNA-ribosyltransferase from Nitrosomonas eutropha (strain DSM 101675 / C91 / Nm57).